Consider the following 82-residue polypeptide: Turripeptide IX-23 (82 aa).

A signal peptide spans 1–23 (MMAKLMITVMMVLLLSLQQGADG). Positions 24 to 50 (RSERWRKNQMAASSIMRNLITARIDPP) are excised as a propeptide. Cystine bridges form between Cys-53–Cys-68, Cys-58–Cys-72, and Cys-64–Cys-79.

The protein belongs to the Pg turripeptide superfamily. As to expression, expressed by the venom duct.

It is found in the secreted. The sequence is that of Turripeptide IX-23 from Gemmula speciosa (Splendid gem-turris).